Reading from the N-terminus, the 31-residue chain is Unknown protein from spot 104 of 2D-PAGE of thylakoid (31 aa).

The protein resides in the plastid. It is found in the chloroplast thylakoid. This chain is Unknown protein from spot 104 of 2D-PAGE of thylakoid, found in Pisum sativum (Garden pea).